Reading from the N-terminus, the 550-residue chain is Hydroxylamine reductase (550 aa).

The [4Fe-4S] cluster site is built by Cys7, Cys10, Cys19, and Cys25. Residues His244, Glu268, Cys312, Cys405, Cys433, Cys458, Glu493, and Lys495 each contribute to the hybrid [4Fe-2O-2S] cluster site. Cys405 bears the Cysteine persulfide mark.

It belongs to the HCP family. [4Fe-4S] cluster serves as cofactor. It depends on hybrid [4Fe-2O-2S] cluster as a cofactor.

It localises to the cytoplasm. The enzyme catalyses A + NH4(+) + H2O = hydroxylamine + AH2 + H(+). Catalyzes the reduction of hydroxylamine to form NH(3) and H(2)O. The polypeptide is Hydroxylamine reductase (Porphyromonas gingivalis (strain ATCC BAA-308 / W83)).